The primary structure comprises 715 residues: Myosin light chain kinase 3 (715 aa).

Positions Val-67 to Pro-114 are disordered. One can recognise a Protein kinase domain in the interval Val-404–Leu-659. ATP-binding positions include Leu-410 to Val-418 and Lys-433. The active-site Proton acceptor is the Asp-525.

The protein belongs to the protein kinase superfamily. CAMK Ser/Thr protein kinase family. The cofactor is Mg(2+). Post-translationally, phosphorylated on serine residues.

It is found in the cytoplasm. It catalyses the reaction L-seryl-[myosin light chain] + ATP = O-phospho-L-seryl-[myosin light chain] + ADP + H(+). The catalysed reaction is L-threonyl-[myosin light chain] + ATP = O-phospho-L-threonyl-[myosin light chain] + ADP + H(+). Kinase that phosphorylates MYL2 in vitro. Increases cardiomyocyte contractility. Required for sarcomere formation in the developing heart. This is Myosin light chain kinase 3 (mylk3) from Danio rerio (Zebrafish).